We begin with the raw amino-acid sequence, 533 residues long: MRILGIEGTAWAASAALYNTHDETIVIESDPYQPDSGGLHPREAAEHMSTALPEVISTILERAVSSGNTDAIGIDAIAFSRGPGLGPCLRVVGTAARTLTQALSVPLIGVNHMIAHLEIGRHQSGFTTPVCLNASGANAHLLGYHRRQYQVLGETMDTGVGNAIDKFTRHLGWNHPGGPKVEAAATDGSYHDLPYVVKGMDFSFSGIMSAAKDAVDNEVPVVDVCTGLQETIFAMLTEVAERALSLTGSNELVLGGGVGQNDRLREMLSTMCTARGASFYAPESRFLRDNAGMIAVLGAAMYEAGQTISVNDSAVDPTFRPDAVTVTWRDDETSVTRTPATLDKTPVRGAEAIVRRINDHVVKRRVEKSYRHPKLDRRLRAERTRAEARLTSAARRLGVPTPLIFDADPETGTLVFEYVGETDLAADLTVSRCHAVGQHLGRIHNAGFVHGDPTTRNVRVDSAQNYLIDFGLGYHTDHVEDHAMDLHVFIQSVTGTASDPAPLITAFESGYAETGISTVQSRLRDIESRGRYH.

Positions 1–328 are kae1; that stretch reads MRILGIEGTA…FRPDAVTVTW (328 aa). Fe cation is bound by residues H112 and H116. Residues 133-137, D165, G178, E182, and N261 each bind L-threonylcarbamoyladenylate; that span reads NASGA. D289 lines the Fe cation pocket. A Protein kinase domain is found at 339-533; sequence PATLDKTPVR…RDIESRGRYH (195 aa). Residues 347–354 and K363 contribute to the ATP site; that span reads VRGAEAIV. Catalysis depends on D452, which acts as the Proton acceptor; for kinase activity.

In the N-terminal section; belongs to the KAE1 / TsaD family. This sequence in the C-terminal section; belongs to the protein kinase superfamily. Tyr protein kinase family. BUD32 subfamily. In terms of assembly, component of the KEOPS complex that consists of Kae1, Bud32, Cgi121 and Pcc1; the whole complex dimerizes. Fe(2+) is required as a cofactor.

It localises to the cytoplasm. It carries out the reaction L-seryl-[protein] + ATP = O-phospho-L-seryl-[protein] + ADP + H(+). The catalysed reaction is L-threonyl-[protein] + ATP = O-phospho-L-threonyl-[protein] + ADP + H(+). The enzyme catalyses L-threonylcarbamoyladenylate + adenosine(37) in tRNA = N(6)-L-threonylcarbamoyladenosine(37) in tRNA + AMP + H(+). Its function is as follows. Required for the formation of a threonylcarbamoyl group on adenosine at position 37 (t(6)A37) in tRNAs that read codons beginning with adenine. Is a component of the KEOPS complex that is probably involved in the transfer of the threonylcarbamoyl moiety of threonylcarbamoyl-AMP (TC-AMP) to the N6 group of A37. The Kae1 domain likely plays a direct catalytic role in this reaction. The Bud32 domain probably displays kinase activity that regulates Kae1 function. This is Probable bifunctional tRNA threonylcarbamoyladenosine biosynthesis protein from Haloquadratum walsbyi (strain DSM 16790 / HBSQ001).